We begin with the raw amino-acid sequence, 122 residues long: Small ribosomal subunit protein uS13 (122 aa).

Residues 98–122 (VRGQRTHTNARTRKGPAKAIAGKKK) form a disordered region.

The protein belongs to the universal ribosomal protein uS13 family. As to quaternary structure, part of the 30S ribosomal subunit. Forms a loose heterodimer with protein S19. Forms two bridges to the 50S subunit in the 70S ribosome.

Its function is as follows. Located at the top of the head of the 30S subunit, it contacts several helices of the 16S rRNA. In the 70S ribosome it contacts the 23S rRNA (bridge B1a) and protein L5 of the 50S subunit (bridge B1b), connecting the 2 subunits; these bridges are implicated in subunit movement. Contacts the tRNAs in the A and P-sites. In Roseobacter denitrificans (strain ATCC 33942 / OCh 114) (Erythrobacter sp. (strain OCh 114)), this protein is Small ribosomal subunit protein uS13.